We begin with the raw amino-acid sequence, 197 residues long: Peptidyl-tRNA hydrolase (197 aa).

Tyrosine 17 lines the tRNA pocket. Histidine 22 functions as the Proton acceptor in the catalytic mechanism. TRNA contacts are provided by phenylalanine 68, asparagine 70, and asparagine 116.

The protein belongs to the PTH family. As to quaternary structure, monomer.

Its subcellular location is the cytoplasm. The catalysed reaction is an N-acyl-L-alpha-aminoacyl-tRNA + H2O = an N-acyl-L-amino acid + a tRNA + H(+). Its function is as follows. Hydrolyzes ribosome-free peptidyl-tRNAs (with 1 or more amino acids incorporated), which drop off the ribosome during protein synthesis, or as a result of ribosome stalling. Catalyzes the release of premature peptidyl moieties from peptidyl-tRNA molecules trapped in stalled 50S ribosomal subunits, and thus maintains levels of free tRNAs and 50S ribosomes. The chain is Peptidyl-tRNA hydrolase from Yersinia enterocolitica serotype O:8 / biotype 1B (strain NCTC 13174 / 8081).